The chain runs to 303 residues: Nucleotide-binding protein Acry_0446 (303 aa).

An ATP-binding site is contributed by 10-17 (GLSGAGRN). 54–57 (DART) is a GTP binding site.

The protein belongs to the RapZ-like family.

Its function is as follows. Displays ATPase and GTPase activities. The chain is Nucleotide-binding protein Acry_0446 from Acidiphilium cryptum (strain JF-5).